The sequence spans 744 residues: 4'-phospho-dehydrooxetanocin synthase (744 aa).

In terms of domain architecture, B12-binding spans 119–259; that stretch reads TVTLVNLCVI…KMLKKELKLD (141 aa). Positions 135, 139, 184, 241, 242, and 308 each coordinate cob(II)alamin. Residues 299–545 form the Radical SAM core domain; that stretch reads SKFRGALTLE…IVSYMLASME (247 aa). Residues Cys-313, Cys-318, and Cys-321 each contribute to the [4Fe-4S] cluster site. Cob(II)alamin-binding residues include Pro-322, His-325, Lys-326, Ala-361, and Glu-363. S-adenosyl-L-methionine-binding residues include Glu-436 and Glu-545.

This sequence belongs to the radical SAM superfamily. It depends on [4Fe-4S] cluster as a cofactor. Cob(II)alamin serves as cofactor.

It catalyses the reaction dAMP + S-adenosyl-L-methionine = 4'-phospho-dehydrooxetanocin + 5'-deoxyadenosine + L-methionine + H(+). The enzyme catalyses AH2 + 2 S-adenosyl-L-methionine = 2 5'-deoxyadenosin-5'-yl radical + 2 L-methionine + A + 2 H(+). It carries out the reaction 2 5'-deoxyadenosin-5'-yl radical + 2 dAMP + A = 2 4'-phospho-dehydrooxetanocin + 2 5'-deoxyadenosine + AH2. With respect to regulation, requires OxsA for the oxidative ring contraction activity. Activation of OxsB requires its direct interaction with OxsA and is independent of OxsA phosphohydrolase activity. In contrast to ring contraction, methylation does not require the presence of OxsA. Its function is as follows. Isomerase involved in the biosynthesis of oxetanocin A (OXT-A), a nucleoside analog with antitumor, antiviral and antibacterial properties. Catalyzes an oxidative ring contraction of dAMP, forming an oxetane aldehyde. In addition, shows methyltransferase activity in vitro and is able to catalyze the radical mediated, stereoselective C2'-methylation of dAMP to form methylated 2'-dAMP. Also catalyzes the demethylation of S-adenosyl-L-methionine (SAM) to S-adenosyl-L-homocysteine (SAH). This chain is 4'-phospho-dehydrooxetanocin synthase, found in Priestia megaterium (Bacillus megaterium).